Here is a 301-residue protein sequence, read N- to C-terminus: N-acetylmuramic acid 6-phosphate etherase (301 aa).

Residues 55 to 215 (IADALRAGGR…STISMVALGK (161 aa)) enclose the SIS domain. The active-site Proton donor is glutamate 83. Residue glutamate 111 is part of the active site.

Belongs to the GCKR-like family. MurNAc-6-P etherase subfamily. As to quaternary structure, homodimer.

The enzyme catalyses N-acetyl-D-muramate 6-phosphate + H2O = N-acetyl-D-glucosamine 6-phosphate + (R)-lactate. It participates in amino-sugar metabolism; 1,6-anhydro-N-acetylmuramate degradation. It functions in the pathway amino-sugar metabolism; N-acetylmuramate degradation. The protein operates within cell wall biogenesis; peptidoglycan recycling. In terms of biological role, specifically catalyzes the cleavage of the D-lactyl ether substituent of MurNAc 6-phosphate, producing GlcNAc 6-phosphate and D-lactate. Together with AnmK, is also required for the utilization of anhydro-N-acetylmuramic acid (anhMurNAc) either imported from the medium or derived from its own cell wall murein, and thus plays a role in cell wall recycling. This Burkholderia lata (strain ATCC 17760 / DSM 23089 / LMG 22485 / NCIMB 9086 / R18194 / 383) protein is N-acetylmuramic acid 6-phosphate etherase.